The primary structure comprises 103 residues: MAAVSLTVSTVKPLGDRIFIKVSESEEKTAGGILLPDSAKEKPQVGEVAQVGPGKLNDDGSRQTPEVSIGDKVLYSKYAGTDIKLGGDEYVLLSEKDILAVVS.

The protein belongs to the GroES chaperonin family. In terms of assembly, heptamer of 7 subunits arranged in a ring. Interacts with the chaperonin GroEL.

It is found in the cytoplasm. In terms of biological role, together with the chaperonin GroEL, plays an essential role in assisting protein folding. The GroEL-GroES system forms a nano-cage that allows encapsulation of the non-native substrate proteins and provides a physical environment optimized to promote and accelerate protein folding. GroES binds to the apical surface of the GroEL ring, thereby capping the opening of the GroEL channel. In Prochlorococcus marinus (strain MIT 9515), this protein is Co-chaperonin GroES.